Consider the following 221-residue polypeptide: 2,3-bisphosphoglycerate-dependent phosphoglycerate mutase (221 aa).

Residues R8–N15, T21–G22, R60, E87–Y90, K98, R114–R115, and G174–N175 contribute to the substrate site. Residue H9 is the Tele-phosphohistidine intermediate of the active site. The active-site Proton donor/acceptor is E87. Positions R114 to S140 are disordered.

The protein belongs to the phosphoglycerate mutase family. BPG-dependent PGAM subfamily.

The enzyme catalyses (2R)-2-phosphoglycerate = (2R)-3-phosphoglycerate. Its pathway is carbohydrate degradation; glycolysis; pyruvate from D-glyceraldehyde 3-phosphate: step 3/5. In terms of biological role, catalyzes the interconversion of 2-phosphoglycerate and 3-phosphoglycerate. This is 2,3-bisphosphoglycerate-dependent phosphoglycerate mutase from Tropheryma whipplei (strain TW08/27) (Whipple's bacillus).